Here is a 212-residue protein sequence, read N- to C-terminus: Peroxisomal membrane protein 4 (212 aa).

A run of 2 helical transmembrane segments spans residues 97-117 and 151-171; these read GGTHQMHSFLAAFIGGLLLFG and LKWDPFPLHTAVIWGLVLWLF. Asparagine 206 carries N-linked (GlcNAc...) asparagine glycosylation.

The protein belongs to the peroxisomal membrane protein PXMP2/4 family. In terms of assembly, interacts with PEX19. As to expression, liver.

It is found in the peroxisome membrane. The polypeptide is Peroxisomal membrane protein 4 (Pxmp4) (Rattus norvegicus (Rat)).